A 348-amino-acid polypeptide reads, in one-letter code: Photosystem II protein D1 (348 aa).

A run of 3 helical transmembrane segments spans residues 33–50 (YIGW…LATV), 122–137 (HFIF…EWEF), and 146–160 (WIFV…AASA). Position 122 (H122) interacts with chlorophyll a. Y130 contributes to the pheophytin a binding site. [CaMn4O5] cluster contacts are provided by D174 and E193. The chain crosses the membrane as a helical span at residues 201-222 (FHILGVAAVFGGSLFSAMHGSL). Residue H202 participates in chlorophyll a binding. A quinone is bound by residues H219 and 268–269 (SF). A Fe cation-binding site is contributed by H219. Position 276 (H276) interacts with Fe cation. Residues 278–292 (FLAAWPVIGIWFTSL) form a helical membrane-spanning segment. Residues H336, E337, D346, and A348 each contribute to the [CaMn4O5] cluster site.

It belongs to the reaction center PufL/M/PsbA/D family. PSII is composed of 1 copy each of membrane proteins PsbA, PsbB, PsbC, PsbD, PsbE, PsbF, PsbH, PsbI, PsbJ, PsbK, PsbL, PsbM, PsbT, PsbX, PsbY, PsbZ, Psb30/Ycf12, at least 3 peripheral proteins of the oxygen-evolving complex and a large number of cofactors. It forms dimeric complexes. It depends on The D1/D2 heterodimer binds P680, chlorophylls that are the primary electron donor of PSII, and subsequent electron acceptors. It shares a non-heme iron and each subunit binds pheophytin, quinone, additional chlorophylls, carotenoids and lipids. D1 provides most of the ligands for the Mn4-Ca-O5 cluster of the oxygen-evolving complex (OEC). There is also a Cl(-1) ion associated with D1 and D2, which is required for oxygen evolution. The PSII complex binds additional chlorophylls, carotenoids and specific lipids. as a cofactor. Post-translationally, tyr-165 forms a radical intermediate that is referred to as redox-active TyrZ, YZ or Y-Z.

The protein localises to the plastid. It is found in the chloroplast thylakoid membrane. The enzyme catalyses 2 a plastoquinone + 4 hnu + 2 H2O = 2 a plastoquinol + O2. Its function is as follows. Photosystem II (PSII) is a light-driven water:plastoquinone oxidoreductase that uses light energy to abstract electrons from H(2)O, generating O(2) and a proton gradient subsequently used for ATP formation. It consists of a core antenna complex that captures photons, and an electron transfer chain that converts photonic excitation into a charge separation. The D1/D2 (PsbA/PsbD) reaction center heterodimer binds P680, the primary electron donor of PSII as well as several subsequent electron acceptors. The polypeptide is Photosystem II protein D1 (Heterocapsa triquetra (Dinoflagellate)).